The sequence spans 662 residues: Aprataxin-like protein (662 aa).

In terms of domain architecture, HIT spans 4 to 108; sequence SSALIKDISK…ISKDFVSTSL (105 aa). A C2H2-type zinc finger spans residues 381 to 403; sequence LRCNQCEFVTNMLLDLKAHLYQH. Residues 482 to 662 are disordered; it reads KNINGPSVNM…PAPPSNSKPS (181 aa). A compositionally biased stretch (low complexity) spans 490-500; sequence NMMNQNNPNNP. Polar residues-rich tracts occupy residues 501 to 513 and 560 to 569; these read FRNT…QSQK and GHQQFPNASS. Residues 570–582 are compositionally biased toward gly residues; that stretch reads VGGGQTGLPGQGQ. Polar residues predominate over residues 588–599; that stretch reads WNSNKIFNQQNR. Low complexity predominate over residues 600–626; the sequence is QNTVQAQPQAQNQQTNQQQIQNSNKNQ. A compositionally biased stretch (pro residues) spans 653-662; sequence PAPPSNSKPS.

Its subcellular location is the nucleus. In terms of biological role, DNA-binding protein involved in single-strand DNA break repair, double-strand DNA break repair and base excision repair. Resolves abortive DNA ligation intermediates formed either at base excision sites, or when DNA ligases attempt to repair non-ligatable breaks induced by reactive oxygen species. Catalyzes the release of adenylate groups covalently linked to 5'-phosphate termini, resulting in the production of 5'-phosphate termini that can be efficiently rejoined. This is Aprataxin-like protein from Drosophila melanogaster (Fruit fly).